The primary structure comprises 259 residues: 5'-nucleotidase SurE (259 aa).

Positions 13, 14, 44, and 101 each coordinate a divalent metal cation.

This sequence belongs to the SurE nucleotidase family. It depends on a divalent metal cation as a cofactor.

The protein resides in the cytoplasm. It carries out the reaction a ribonucleoside 5'-phosphate + H2O = a ribonucleoside + phosphate. Its function is as follows. Nucleotidase that shows phosphatase activity on nucleoside 5'-monophosphates. The chain is 5'-nucleotidase SurE from Flavobacterium johnsoniae (strain ATCC 17061 / DSM 2064 / JCM 8514 / BCRC 14874 / CCUG 350202 / NBRC 14942 / NCIMB 11054 / UW101) (Cytophaga johnsonae).